A 258-amino-acid chain; its full sequence is Indole-3-glycerol phosphate synthase (258 aa).

The protein belongs to the TrpC family.

The enzyme catalyses 1-(2-carboxyphenylamino)-1-deoxy-D-ribulose 5-phosphate + H(+) = (1S,2R)-1-C-(indol-3-yl)glycerol 3-phosphate + CO2 + H2O. It participates in amino-acid biosynthesis; L-tryptophan biosynthesis; L-tryptophan from chorismate: step 4/5. The sequence is that of Indole-3-glycerol phosphate synthase from Campylobacter jejuni (strain RM1221).